The primary structure comprises 424 residues: Kynurenine--oxoglutarate transaminase 1 (424 aa).

G36 is a substrate binding site. K82 is modified (N6-succinyllysine). A substrate-binding site is contributed by N185. Residue K247 is modified to N6-(pyridoxal phosphate)lysine. R398 lines the substrate pocket. An N6-succinyllysine modification is found at K413.

The protein belongs to the class-I pyridoxal-phosphate-dependent aminotransferase family. Homodimer. Pyridoxal 5'-phosphate is required as a cofactor.

The protein resides in the cytoplasm. The protein localises to the cytosol. It catalyses the reaction L-kynurenine + 2-oxoglutarate = kynurenate + L-glutamate + H2O. It carries out the reaction 3-phenylpyruvate + L-glutamine = 2-oxoglutaramate + L-phenylalanine. The enzyme catalyses an S-substituted L-cysteine + H2O = a thiol + pyruvate + NH4(+). It participates in amino-acid degradation; L-kynurenine degradation; kynurenate from L-kynurenine: step 1/2. Functionally, catalyzes the irreversible transamination of the L-tryptophan metabolite L-kynurenine to form kynurenic acid (KA), an intermediate in the tryptophan catabolic pathway which is also a broad spectrum antagonist of the three ionotropic excitatory amino acid receptors among others. Metabolizes the cysteine conjugates of certain halogenated alkenes and alkanes to form reactive metabolites. Catalyzes the beta-elimination of S-conjugates and Se-conjugates of L-(seleno)cysteine, resulting in the cleavage of the C-S or C-Se bond. The sequence is that of Kynurenine--oxoglutarate transaminase 1 (Kyat1) from Mus musculus (Mouse).